Consider the following 80-residue polypeptide: Exodeoxyribonuclease 7 small subunit (80 aa).

The protein belongs to the XseB family. Heterooligomer composed of large and small subunits.

It localises to the cytoplasm. The enzyme catalyses Exonucleolytic cleavage in either 5'- to 3'- or 3'- to 5'-direction to yield nucleoside 5'-phosphates.. Bidirectionally degrades single-stranded DNA into large acid-insoluble oligonucleotides, which are then degraded further into small acid-soluble oligonucleotides. This chain is Exodeoxyribonuclease 7 small subunit, found in Aliivibrio fischeri (strain ATCC 700601 / ES114) (Vibrio fischeri).